The primary structure comprises 454 residues: Sensor histidine kinase YkoH (454 aa).

The Cytoplasmic portion of the chain corresponds to 1–12 (MKLKTKIHLYTS). Residues 13–33 (ISLLILLILVHTAVYLIFSSA) traverse the membrane as a helical segment. Over 34–153 (LTSKDAARLA…NTEESLFLLK (120 aa)) the chain is Extracellular. Residues 154 to 174 (IILIAASAAVCIASFFAGSLL) traverse the membrane as a helical segment. The Cytoplasmic portion of the chain corresponds to 175-454 (ARRIINPIRR…QFSEQNGGGR (280 aa)). The HAMP domain maps to 176–230 (RRIINPIRRLMITMKDIQRDKEFKTISLEGQSNDELYQMGLTFNEMAMMLKEHYD). The Histidine kinase domain maps to 238–450 (DASHELKTPL…AVTMQFSEQN (213 aa)). The residue at position 241 (His-241) is a Phosphohistidine; by autocatalysis.

Its subcellular location is the cell membrane. It catalyses the reaction ATP + protein L-histidine = ADP + protein N-phospho-L-histidine.. Its function is as follows. Probable member of the two-component regulatory system YkoH/YkoG. Potentially phosphorylates YkoG. In Bacillus subtilis (strain 168), this protein is Sensor histidine kinase YkoH (ykoH).